We begin with the raw amino-acid sequence, 354 residues long: Protein FAM181A (354 aa).

2 stretches are compositionally biased toward basic and acidic residues: residues 1–14 and 129–142; these read MPLEERRSSGERND and YLKRGSEDRPRRLL. 3 disordered regions span residues 1 to 35, 117 to 160, and 172 to 193; these read MPLEERRSSGERNDAAPTNHRRPGEKRASTAKQVS, LPRG…CKEK, and AKEQLPQRQHPEAAQPGQVPMR.

This sequence belongs to the FAM181 family.

The polypeptide is Protein FAM181A (FAM181A) (Homo sapiens (Human)).